Here is a 668-residue protein sequence, read N- to C-terminus: L-type lectin-domain containing receptor kinase I.7 (668 aa).

Residues 1-21 (MIRGLLLGIIWMIFCVCSSFQ) form the signal peptide. At 22–285 (QETPFVYNNF…SSTKKKSTSP (264 aa)) the chain is on the extracellular side. Positions 24 to 256 (TPFVYNNFGH…YQYILGWSFS (233 aa)) are legume-lectin like. N-linked (GlcNAc...) asparagine glycosylation is found at N56, N125, N167, N201, and N223. A helical membrane pass occupies residues 286–306 (VLSVLLGLIAFIVLGILVVAY). Topologically, residues 307–668 (LYRRNLYSEV…THSVLYGSGR (362 aa)) are cytoplasmic. Residues 341–620 (FNRSEFLGRG…LNGNLALPEF (280 aa)) form the Protein kinase domain. ATP-binding positions include 347-355 (LGRGGFGEV) and K372. The active-site Proton acceptor is the D468.

This sequence in the C-terminal section; belongs to the protein kinase superfamily. Ser/Thr protein kinase family. In the N-terminal section; belongs to the leguminous lectin family.

It is found in the cell membrane. The enzyme catalyses L-seryl-[protein] + ATP = O-phospho-L-seryl-[protein] + ADP + H(+). The catalysed reaction is L-threonyl-[protein] + ATP = O-phospho-L-threonyl-[protein] + ADP + H(+). In terms of biological role, involved in resistance response to the pathogenic oomycetes Phytophthora infestans and Phytophthora capsici. This is L-type lectin-domain containing receptor kinase I.7 from Arabidopsis thaliana (Mouse-ear cress).